The primary structure comprises 165 residues: Nucleotide-binding protein P9301_05061 (165 aa).

This sequence belongs to the YajQ family.

In terms of biological role, nucleotide-binding protein. This chain is Nucleotide-binding protein P9301_05061, found in Prochlorococcus marinus (strain MIT 9301).